The chain runs to 255 residues: Small ribosomal subunit protein uS2 (255 aa).

The interval 232 to 255 (ASGRDIGASEEAPIEPALEDEAGA) is disordered.

Belongs to the universal ribosomal protein uS2 family.

In Agrobacterium fabrum (strain C58 / ATCC 33970) (Agrobacterium tumefaciens (strain C58)), this protein is Small ribosomal subunit protein uS2.